Reading from the N-terminus, the 563-residue chain is Dihydroxy-acid dehydratase (563 aa).

Aspartate 79 contributes to the Mg(2+) binding site. Cysteine 120 contributes to the [2Fe-2S] cluster binding site. Aspartate 121 and lysine 122 together coordinate Mg(2+). Lysine 122 bears the N6-carboxylysine mark. Cysteine 193 provides a ligand contact to [2Fe-2S] cluster. Glutamate 451 contacts Mg(2+). The active-site Proton acceptor is the serine 477.

This sequence belongs to the IlvD/Edd family. Homodimer. [2Fe-2S] cluster is required as a cofactor. It depends on Mg(2+) as a cofactor.

The catalysed reaction is (2R)-2,3-dihydroxy-3-methylbutanoate = 3-methyl-2-oxobutanoate + H2O. It carries out the reaction (2R,3R)-2,3-dihydroxy-3-methylpentanoate = (S)-3-methyl-2-oxopentanoate + H2O. The protein operates within amino-acid biosynthesis; L-isoleucine biosynthesis; L-isoleucine from 2-oxobutanoate: step 3/4. It participates in amino-acid biosynthesis; L-valine biosynthesis; L-valine from pyruvate: step 3/4. Its function is as follows. Functions in the biosynthesis of branched-chain amino acids. Catalyzes the dehydration of (2R,3R)-2,3-dihydroxy-3-methylpentanoate (2,3-dihydroxy-3-methylvalerate) into 2-oxo-3-methylpentanoate (2-oxo-3-methylvalerate) and of (2R)-2,3-dihydroxy-3-methylbutanoate (2,3-dihydroxyisovalerate) into 2-oxo-3-methylbutanoate (2-oxoisovalerate), the penultimate precursor to L-isoleucine and L-valine, respectively. In Sulfurovum sp. (strain NBC37-1), this protein is Dihydroxy-acid dehydratase.